The sequence spans 501 residues: Lysine--tRNA ligase (501 aa).

2 residues coordinate Mg(2+): E411 and E418.

The protein belongs to the class-II aminoacyl-tRNA synthetase family. As to quaternary structure, homodimer. Mg(2+) is required as a cofactor.

Its subcellular location is the cytoplasm. The catalysed reaction is tRNA(Lys) + L-lysine + ATP = L-lysyl-tRNA(Lys) + AMP + diphosphate. In Clostridium perfringens (strain 13 / Type A), this protein is Lysine--tRNA ligase.